The following is a 202-amino-acid chain: Thymidylate kinase (202 aa).

13-20 lines the ATP pocket; it reads GTDGAGKS.

Belongs to the thymidylate kinase family.

The enzyme catalyses dTMP + ATP = dTDP + ADP. Functionally, phosphorylation of dTMP to form dTDP in both de novo and salvage pathways of dTTP synthesis. This chain is Thymidylate kinase, found in Desulfotalea psychrophila (strain LSv54 / DSM 12343).